Here is a 310-residue protein sequence, read N- to C-terminus: Porphobilinogen deaminase (310 aa).

Residue C236 is modified to S-(dipyrrolylmethanemethyl)cysteine.

Belongs to the HMBS family. Monomer. Requires dipyrromethane as cofactor.

It carries out the reaction 4 porphobilinogen + H2O = hydroxymethylbilane + 4 NH4(+). The protein operates within porphyrin-containing compound metabolism; protoporphyrin-IX biosynthesis; coproporphyrinogen-III from 5-aminolevulinate: step 2/4. Its function is as follows. Tetrapolymerization of the monopyrrole PBG into the hydroxymethylbilane pre-uroporphyrinogen in several discrete steps. The sequence is that of Porphobilinogen deaminase from Nitratiruptor sp. (strain SB155-2).